The chain runs to 435 residues: Mitochondrial distribution and morphology protein 12 (435 aa).

An SMP-LTD domain is found at 1 to 435; that stretch reads MSIEVDWGAA…VYPSFWTFLV (435 aa). Disordered regions lie at residues 73 to 113 and 186 to 268; these read DEDD…AINH and WNDS…TSEE. Residues 96–113 show a composition bias toward basic and acidic residues; it reads THPELNESSFRDDNAINH. Low complexity predominate over residues 218–238; it reads SSNPTSRPSTSSTLPSHPSGS. Residues 251–268 show a composition bias toward basic and acidic residues; that stretch reads HGSHPEEHGHLDDPTSEE.

Belongs to the MDM12 family. Component of the ER-mitochondria encounter structure (ERMES) or MDM complex, composed of mmm1, mdm10, mdm12 and mdm34. A mmm1 homodimer associates with one molecule of mdm12 on each side in a pairwise head-to-tail manner, and the SMP-LTD domains of mmm1 and mdm12 generate a continuous hydrophobic tunnel for phospholipid trafficking.

It is found in the mitochondrion outer membrane. Its subcellular location is the endoplasmic reticulum membrane. Its function is as follows. Component of the ERMES/MDM complex, which serves as a molecular tether to connect the endoplasmic reticulum (ER) and mitochondria. Components of this complex are involved in the control of mitochondrial shape and protein biogenesis, and function in nonvesicular lipid trafficking between the ER and mitochondria. Mdm12 is required for the interaction of the ER-resident membrane protein mmm1 and the outer mitochondrial membrane-resident beta-barrel protein mdm10. The mdm12-mmm1 subcomplex functions in the major beta-barrel assembly pathway that is responsible for biogenesis of all mitochondrial outer membrane beta-barrel proteins, and acts in a late step after the SAM complex. The mdm10-mdm12-mmm1 subcomplex further acts in the TOM40-specific pathway after the action of the mdm12-mmm1 complex. Essential for establishing and maintaining the structure of mitochondria and maintenance of mtDNA nucleoids. The chain is Mitochondrial distribution and morphology protein 12 from Aspergillus niger (strain ATCC MYA-4892 / CBS 513.88 / FGSC A1513).